Here is a 1458-residue protein sequence, read N- to C-terminus: Secretory phospholipase A2 receptor (1458 aa).

Residues 1 to 23 (MLLSLLLLLLLGAPRRCTEGAAA) form the signal peptide. Residues 24 to 1393 (ALSPERVLKW…EHPGKGPSHS (1370 aa)) lie on the Extracellular side of the membrane. Disulfide bonds link Cys49-Cys62, Cys87-Cys104, Cys176-Cys202, Cys190-Cys217, Cys258-Cys352, Cys328-Cys344, Cys404-Cys499, Cys476-Cys491, Cys615-Cys632, Cys697-Cys794, Cys772-Cys786, Cys838-Cys935, Cys912-Cys927, Cys1065-Cys1085, Cys1207-Cys1221, Cys1278-Cys1373, and Cys1350-Cys1365. One can recognise a Ricin B-type lectin domain in the interval 49–113 (CIQAGKSVLT…CDSTHVSLRW (65 aa)). Asn91 carries N-linked (GlcNAc...) asparagine glycosylation. Residues 171 to 219 (AHGTPCMFPFQYNHQWHHECTREGRQDDSLWCATTSRYERDEKWGFCPD) enclose the Fibronectin type-II domain. 8 consecutive C-type lectin domains span residues 227-356 (CDAV…KKYL), 374-502 (TDCE…CKKP), 511-645 (SGCQ…KQPV), 660-798 (HPCY…KIPR), 815-939 (LFHQ…KRKT), 954-1098 (GTCP…EKIQ), 1117-1231 (LEYG…AICH), and 1243-1376 (ELCS…CKMK). Residues Asn408, Asn431, and Asn452 are each glycosylated (N-linked (GlcNAc...) asparagine). The chain crosses the membrane as a helical span at residues 1394 to 1416 (IVPLAVALTLVVILAIITLSFYI). Residues 1417 to 1458 (YKQNKGFFRRLAGVGNSYYPTTNFSTIHLEENILISDLEKND) are Cytoplasmic-facing. Residues 1432 to 1438 (NSYYPTT) carry the Endocytosis signal motif.

Interacts with sPLA2-IB/PLA2G1B; this interaction mediates intracellular signaling as well as clearance of extracellular sPLA2-IB/PLA2G1B via endocytotic pathway. Interacts with sPLA2-X/PLA2G10; this interaction mediates sPLA2-X/PLA2G10 clearance and inactivation. Post-translationally, the secretory phospholipase A2 receptor form may be produced by the action of metalloproteinases. It contains all extracellular domains and only lacks transmembrane and cytosolic regions. It is however unclear whether this form is produced by proteolytic cleavage as suggested by some experiments, or by alternative splicing. Lung, skeletal muscle, brain, kidney and heart.

It is found in the cell membrane. The protein localises to the secreted. In terms of biological role, receptor for secretory phospholipase A2 (sPLA2). Also able to bind to snake PA2-like toxins. Although its precise function remains unclear, binding of sPLA2 to its receptor participates in both positive and negative regulation of sPLA2 functions as well as clearance of sPLA2. Binding of sPLA2-IB/PLA2G1B induces various effects depending on the cell type, such as activation of the mitogen-activated protein kinase (MAPK) cascade to induce cell proliferation, the production of lipid mediators, selective release of arachidonic acid in bone marrow-derived mast cells. In neutrophils, binding of sPLA2-IB/PLA2G1B can activate p38 MAPK to stimulate elastase release and cell adhesion. May be involved in responses in pro-inflammatory cytokine productions during endotoxic shock. Also has endocytic properties and rapidly internalizes sPLA2 ligands, which is particularly important for the clearance of extracellular sPLA2s to protect their potent enzymatic activities. The soluble secretory phospholipase A2 receptor form is circulating and acts as a negative regulator of sPLA2 functions by blocking the biological functions of sPLA2-IB/PLA2G1B and sPLA2-X/PLA2G10. The chain is Secretory phospholipase A2 receptor (PLA2R1) from Oryctolagus cuniculus (Rabbit).